Consider the following 104-residue polypeptide: Large ribosomal subunit protein uL24 (104 aa).

The protein belongs to the universal ribosomal protein uL24 family. As to quaternary structure, part of the 50S ribosomal subunit.

One of two assembly initiator proteins, it binds directly to the 5'-end of the 23S rRNA, where it nucleates assembly of the 50S subunit. Functionally, one of the proteins that surrounds the polypeptide exit tunnel on the outside of the subunit. This chain is Large ribosomal subunit protein uL24, found in Shewanella halifaxensis (strain HAW-EB4).